Here is a 336-residue protein sequence, read N- to C-terminus: D-alanine--D-alanine ligase (336 aa).

The region spanning 124–330 (KMWFSALGIP…FTEYLSLVIN (207 aa)) is the ATP-grasp domain. Residue 154–209 (ALENWGSIFVKAASQGSSVGCYKVDDSSKVAGVLKDAFGYAPYVIVEKTIKARELE) coordinates ATP. Positions 284, 297, and 299 each coordinate Mg(2+).

Belongs to the D-alanine--D-alanine ligase family. Mg(2+) serves as cofactor. It depends on Mn(2+) as a cofactor.

The protein resides in the cytoplasm. It carries out the reaction 2 D-alanine + ATP = D-alanyl-D-alanine + ADP + phosphate + H(+). Its pathway is cell wall biogenesis; peptidoglycan biosynthesis. Its function is as follows. Cell wall formation. The protein is D-alanine--D-alanine ligase of Shewanella sp. (strain MR-4).